The chain runs to 511 residues: DNA nucleotidylexotransferase (511 aa).

A disordered region spans residues 1 to 26 (MDPLQTAHAGPRKKRPRQTGASMAST). A Nuclear localization signal motif is present at residues 11–17 (PRKKRPR). Positions 27 to 124 (PQDVRFQDLV…KPVETTGKHQ (98 aa)) constitute a BRCT domain. Position 134 is a phosphoserine (serine 134). The tract at residues 151 to 511 (SQYACQRRTT…DYIEPSERNA (361 aa)) is mediates interaction with DNTTIP2. The interval 258 to 262 (VGLKT) is involved in DNA binding. Residues 333 to 338 (GFRRGK) and 342 to 345 (HDVD) contribute to the a 2'-deoxyribonucleoside 5'-triphosphate site. 3 residues coordinate Mg(2+): aspartate 343, aspartate 345, and aspartate 435. An a 2'-deoxyribonucleoside 5'-triphosphate-binding site is contributed by 450 to 451 (GW).

It belongs to the DNA polymerase type-X family. In terms of assembly, interacts with PRP19 and DNTTIP1. Forms a ternary complex with DNTTIP2 and core histone. Released from this complex by PCNA. Interacts with TRERF1. The cofactor is Mg(2+).

Its subcellular location is the nucleus. It carries out the reaction DNA(n) + a 2'-deoxyribonucleoside 5'-triphosphate = DNA(n+1) + diphosphate. Functionally, template-independent DNA polymerase which catalyzes the random addition of deoxynucleoside 5'-triphosphate to the 3'-end of a DNA initiator. One of the in vivo functions of this enzyme is the addition of nucleotides at the junction (N region) of rearranged Ig heavy chain and T-cell receptor gene segments during the maturation of B- and T-cells. The chain is DNA nucleotidylexotransferase (DNTT) from Eulemur macaco (Black lemur).